Reading from the N-terminus, the 425-residue chain is Serine hydroxymethyltransferase (425 aa).

(6S)-5,6,7,8-tetrahydrofolate contacts are provided by residues leucine 124 and 128–130; that span reads GHL. N6-(pyridoxal phosphate)lysine is present on lysine 233.

The protein belongs to the SHMT family. In terms of assembly, homodimer. Pyridoxal 5'-phosphate is required as a cofactor.

It is found in the cytoplasm. The catalysed reaction is (6R)-5,10-methylene-5,6,7,8-tetrahydrofolate + glycine + H2O = (6S)-5,6,7,8-tetrahydrofolate + L-serine. The protein operates within one-carbon metabolism; tetrahydrofolate interconversion. It functions in the pathway amino-acid biosynthesis; glycine biosynthesis; glycine from L-serine: step 1/1. Catalyzes the reversible interconversion of serine and glycine with tetrahydrofolate (THF) serving as the one-carbon carrier. This reaction serves as the major source of one-carbon groups required for the biosynthesis of purines, thymidylate, methionine, and other important biomolecules. Also exhibits THF-independent aldolase activity toward beta-hydroxyamino acids, producing glycine and aldehydes, via a retro-aldol mechanism. The sequence is that of Serine hydroxymethyltransferase from Clavibacter sepedonicus (Clavibacter michiganensis subsp. sepedonicus).